Here is a 275-residue protein sequence, read N- to C-terminus: Undecaprenyl-diphosphatase (275 aa).

7 consecutive transmembrane segments (helical) span residues 1 to 21 (MTTF…FLPV), 41 to 61 (ILFL…FVYA), 95 to 115 (LLII…KDLF), 118 to 138 (FYNS…LLWT), 192 to 212 (ATKF…VFEV), 223 to 243 (FTLT…VFAI), and 255 to 275 (LYYF…FSLL).

Belongs to the UppP family.

The protein localises to the cell membrane. It catalyses the reaction di-trans,octa-cis-undecaprenyl diphosphate + H2O = di-trans,octa-cis-undecaprenyl phosphate + phosphate + H(+). In terms of biological role, catalyzes the dephosphorylation of undecaprenyl diphosphate (UPP). Confers resistance to bacitracin. The sequence is that of Undecaprenyl-diphosphatase from Alkaliphilus metalliredigens (strain QYMF).